An 87-amino-acid chain; its full sequence is MNQNLSIRKRNKLKQDSGSPEAQISFLTLRVLQISSHLKMHTKDYSSKRGLRKVLGTRKRLLSYLCREDVSRYNKLLNNLGIRAAKK.

The tract at residues 1 to 20 is disordered; sequence MNQNLSIRKRNKLKQDSGSP.

It belongs to the universal ribosomal protein uS15 family. In terms of assembly, part of the 30S ribosomal subunit.

It localises to the plastid. The protein localises to the chloroplast. This chain is Small ribosomal subunit protein uS15c (rps15), found in Zygnema circumcarinatum (Green alga).